The primary structure comprises 133 residues: MAARLDRLKKRADFLRVAALRRKWAAPGLILQAAPASGTDLQADSLRVGFTVSKKVGNSVCRNRARRRLREAVAQVFPAHASAGLDYVVIGRKETLERPYSLLLQDLLAALKRVGALQKTHAAEAPDTASPQS.

Belongs to the RnpA family. As to quaternary structure, consists of a catalytic RNA component (M1 or rnpB) and a protein subunit.

It catalyses the reaction Endonucleolytic cleavage of RNA, removing 5'-extranucleotides from tRNA precursor.. RNaseP catalyzes the removal of the 5'-leader sequence from pre-tRNA to produce the mature 5'-terminus. It can also cleave other RNA substrates such as 4.5S RNA. The protein component plays an auxiliary but essential role in vivo by binding to the 5'-leader sequence and broadening the substrate specificity of the ribozyme. The polypeptide is Ribonuclease P protein component (Paramagnetospirillum magneticum (strain ATCC 700264 / AMB-1) (Magnetospirillum magneticum)).